Here is a 559-residue protein sequence, read N- to C-terminus: Regulatory protein PHO2 (559 aa).

Disordered stretches follow at residues Ala-16–Ala-88, Leu-132–Arg-158, Ile-293–Asn-333, and Pro-534–Ile-559. 2 stretches are compositionally biased toward low complexity: residues His-24 to Gln-52 and Asn-63 to Ser-74. The segment at residues Gln-77 to Gln-136 is a DNA-binding region (homeobox). Polar residues predominate over residues Lys-141–Asp-151. The segment covering Ile-293 to Asn-307 has biased composition (low complexity). Residues Asn-308–Ser-323 show a composition bias toward acidic residues. A compositionally biased stretch (basic and acidic residues) spans Ser-324–Asn-333. Thr-542 carries the post-translational modification Phosphothreonine.

It is found in the nucleus. Its function is as follows. Regulator in phosphate metabolism and acts as a derepressor of another central regulator PHO5. Binds to the upstream activator sequence (UAS) of PHO5. It also binds to the TRP4, HIS4, and CYC1 promoters. The sequence is that of Regulatory protein PHO2 (PHO2) from Saccharomyces cerevisiae (strain ATCC 204508 / S288c) (Baker's yeast).